Reading from the N-terminus, the 302-residue chain is Phospho-N-acetylmuramoyl-pentapeptide-transferase (302 aa).

The next 10 helical transmembrane spans lie at 1 to 21, 42 to 62, 67 to 87, 101 to 121, 123 to 143, 154 to 174, 178 to 198, 204 to 224, 229 to 249, and 279 to 299; these read MIAA…NLFR, GTPT…GVLS, VILT…FLSI, ALLQ…ETAV, FFGI…IVIV, GLDG…WFFL, GFSE…LIFN, IFMG…VSVL, FYLI…ILQI, and IVAV…EVFG.

It belongs to the glycosyltransferase 4 family. MraY subfamily. Mg(2+) serves as cofactor.

It localises to the cell inner membrane. The catalysed reaction is UDP-N-acetyl-alpha-D-muramoyl-L-alanyl-gamma-D-glutamyl-meso-2,6-diaminopimeloyl-D-alanyl-D-alanine + di-trans,octa-cis-undecaprenyl phosphate = di-trans,octa-cis-undecaprenyl diphospho-N-acetyl-alpha-D-muramoyl-L-alanyl-D-glutamyl-meso-2,6-diaminopimeloyl-D-alanyl-D-alanine + UMP. It participates in cell wall biogenesis; peptidoglycan biosynthesis. Catalyzes the initial step of the lipid cycle reactions in the biosynthesis of the cell wall peptidoglycan: transfers peptidoglycan precursor phospho-MurNAc-pentapeptide from UDP-MurNAc-pentapeptide onto the lipid carrier undecaprenyl phosphate, yielding undecaprenyl-pyrophosphoryl-MurNAc-pentapeptide, known as lipid I. This is Phospho-N-acetylmuramoyl-pentapeptide-transferase from Thermotoga neapolitana (strain ATCC 49049 / DSM 4359 / NBRC 107923 / NS-E).